Here is a 569-residue protein sequence, read N- to C-terminus: Aspartic proteinase 3 (569 aa).

Residues 1–21 form the signal peptide; sequence MKLKTVRSAVLSSLFASQVLG. The propeptide occupies 22–67; the sequence is KIIPAANKRDDDSNSKFVKLPFHKLYGDSLENVGSDKKPEVRLLKR. The 393-residue stretch at 83–475 folds into the Peptidase A1 domain; it reads YSVDLEVGTP…DLENLEISMA (393 aa). Asn95 carries N-linked (GlcNAc...) asparagine glycosylation. The active site involves Asp101. Residues Asn203, Asn232, Asn242, Asn245, Asn299, and Asn358 are each glycosylated (N-linked (GlcNAc...) asparagine). Asp371 is an active-site residue. N-linked (GlcNAc...) asparagine glycans are attached at residues Asn480, Asn522, and Asn532. Asn548 carries GPI-anchor amidated asparagine lipidation. The propeptide at 549–569 is removed in mature form; it reads VGDHIVPSLPLTLISLLFAFI.

Belongs to the peptidase A1 family. Consists of an alpha and a beta subunit, which are maintained together by a disulfide bond. The zymogen is transported to the periplasm, where the propeptide is removed and the enzyme is further subjected to an internal, autocatalytic cleavage to generate an alpha/beta two-subunit endopeptidase. The proteolytic processing at the cell surface is regulated by the environmental pH. In terms of processing, extensively N-glycosylated.

It is found in the cell membrane. The catalysed reaction is Hydrolyzes various precursor proteins with Arg or Lys in P1, and commonly Arg or Lys also in P2. The P3 amino acid is usually non-polar, but otherwise additional basic amino acids are favorable in both non-prime and prime positions.. Cleaves proteins C-terminally to mono- and paired-basic residues. Involved in the shedding of a subset of GPI-anchored plasma membrane proteins from the cell surface, including itself, GAS1 and MSB2. May also play a role in the maturation of GPI-mannoproteins associated with the cell wall. Can process the alpha-mating factor precursor. Required for cell wall integrity. This chain is Aspartic proteinase 3 (YPS1), found in Saccharomyces cerevisiae (strain ATCC 204508 / S288c) (Baker's yeast).